A 189-amino-acid chain; its full sequence is Elongation factor P (189 aa).

It belongs to the elongation factor P family.

It is found in the cytoplasm. The protein operates within protein biosynthesis; polypeptide chain elongation. Its function is as follows. Involved in peptide bond synthesis. Stimulates efficient translation and peptide-bond synthesis on native or reconstituted 70S ribosomes in vitro. Probably functions indirectly by altering the affinity of the ribosome for aminoacyl-tRNA, thus increasing their reactivity as acceptors for peptidyl transferase. The sequence is that of Elongation factor P from Pseudomonas syringae pv. syringae (strain B728a).